A 475-amino-acid polypeptide reads, in one-letter code: UDP-N-acetylmuramate--L-alanine ligase (475 aa).

Residue Gly125–Thr131 coordinates ATP.

Belongs to the MurCDEF family.

It is found in the cytoplasm. It catalyses the reaction UDP-N-acetyl-alpha-D-muramate + L-alanine + ATP = UDP-N-acetyl-alpha-D-muramoyl-L-alanine + ADP + phosphate + H(+). Its pathway is cell wall biogenesis; peptidoglycan biosynthesis. In terms of biological role, cell wall formation. This chain is UDP-N-acetylmuramate--L-alanine ligase, found in Haemophilus influenzae (strain 86-028NP).